The following is a 131-amino-acid chain: Nitrogenase-stabilizing/protective protein NifW (131 aa).

The protein belongs to the NifW family. Homotrimer; associates with NifD.

Functionally, may protect the nitrogenase Fe-Mo protein from oxidative damage. The sequence is that of Nitrogenase-stabilizing/protective protein NifW from Frankia alni (strain DSM 45986 / CECT 9034 / ACN14a).